Here is a 288-residue protein sequence, read N- to C-terminus: Nucleotide-binding protein Pcar_1935 (288 aa).

An ATP-binding site is contributed by Gly-11–Thr-18. Asp-62–Asn-65 contributes to the GTP binding site.

This sequence belongs to the RapZ-like family.

In terms of biological role, displays ATPase and GTPase activities. This is Nucleotide-binding protein Pcar_1935 from Syntrophotalea carbinolica (strain DSM 2380 / NBRC 103641 / GraBd1) (Pelobacter carbinolicus).